The primary structure comprises 956 residues: Chromatin assembly factor 1 subunit A (956 aa).

The tract at residues 1 to 49 (MLEELECGAPGARGAATAMDCKDRPAFPVKKLIQARLPFKRLNLVPKGK) is binds to PCNA. A binds to CBX1 chromo shadow domain region spans residues 1–314 (MLEELECGAP…QHSSTSPFPT (314 aa)). 2 disordered regions span residues 45-65 (VPKG…QSKS) and 122-155 (DSNE…EDTG). Residues 56–65 (DQGTSVQSKS) show a composition bias toward polar residues. 5 positions are modified to phosphoserine: S65, S123, S138, S141, and S143. K182 participates in a covalent cross-link: Glycyl lysine isopeptide (Lys-Gly) (interchain with G-Cter in SUMO1); alternate. K182 is covalently cross-linked (Glycyl lysine isopeptide (Lys-Gly) (interchain with G-Cter in SUMO2); alternate). A disordered region spans residues 188-222 (VGCGGAGRRGDSQECSPRSCPELTSGPRMCPRKEQ). A phosphoserine mark is found at S206 and S224. The PxVxL motif signature appears at 233 to 246 (FKGKVPMVVLQDIL). Disordered stretches follow at residues 250–432 (PPQI…KRLR) and 599–639 (DSDE…VPHG). Composition is skewed to low complexity over residues 282–296 (LSHS…TSSP) and 307–317 (SSTSPFPTSTP). Residue S310 is modified to Phosphoserine. Over residues 329–432 (STEKNKLRLQ…RKKEEEKRLR (104 aa)) the composition is skewed to basic and acidic residues. 2 stretches are compositionally biased toward acidic residues: residues 599–610 (DSDEEWEEEEPG) and 618–633 (GDDD…EDDG). The interval 642–678 (SEDEGVTEECADPENHKVRQKLKAKEWDEFLAKGKRF) is necessary for homodimerization and competence for chromatin assembly. The interval 660–956 (RQKLKAKEWD…TLTASPLGAS (297 aa)) is binds to p60. A Phosphothreonine modification is found at T722. Residues 765-790 (LLSNHTGSPRSPSTTYLHTPTPSEDA) are disordered. A compositionally biased stretch (polar residues) spans 767 to 786 (SNHTGSPRSPSTTYLHTPTP). Residues S772, S775, and S803 each carry the phosphoserine modification. Disordered stretches follow at residues 844–873 (SVPS…KRKS) and 933–956 (SGAG…LGAS). Residues 855–866 (SVPSTGPSQGTP) show a composition bias toward polar residues. Phosphothreonine is present on T865. Phosphoserine is present on residues S868, S873, and S951.

This sequence belongs to the CHAF1A family. As to quaternary structure, homodimer. Part of the CAF-1 complex that contains RBBP4, CHAF1B and CHAF1A. CHAF1A binds directly to CHAF1B. Only minor amounts of RBBP4 are complexed with CHAF1A and CHAF1B in G1 phase. Interacts with PCNA; the interaction is direct. Interacts (via the PxVxL motif) with CBX5; the interaction is direct. Interacts with MBD1. Interacts with histones H3.1, H3.2 and H3.1t.

The protein localises to the nucleus. Its function is as follows. Acts as a component of the histone chaperone complex chromatin assembly factor 1 (CAF-1), which assembles histone octamers onto DNA during replication and repair. CAF-1 performs the first step of the nucleosome assembly process, bringing newly synthesized histones H3 and H4 to replicating DNA; histones H2A/H2B can bind to this chromatin precursor subsequent to DNA replication to complete the histone octamer. It may play a role in heterochromatin maintenance in proliferating cells by bringing newly synthesized cbx proteins to heterochromatic DNA replication foci. The chain is Chromatin assembly factor 1 subunit A from Homo sapiens (Human).